We begin with the raw amino-acid sequence, 430 residues long: Protein translocase subunit SecY (430 aa).

The next 10 membrane-spanning stretches (helical) occupy residues 18–38 (IFFT…PAPG), 68–88 (FSIF…MQLL), 117–137 (FAII…NNYL), 148–168 (MSYL…LWLG), 179–199 (GISI…LIQF), 215–235 (LQVA…VYVL), 270–290 (VIPV…TMFF), 308–328 (NIGM…YAFV), 368–388 (FVGS…TKFM), and 390–410 (LPQS…VAIE).

The protein belongs to the SecY/SEC61-alpha family. Component of the Sec protein translocase complex. Heterotrimer consisting of SecY, SecE and SecG subunits. The heterotrimers can form oligomers, although 1 heterotrimer is thought to be able to translocate proteins. Interacts with the ribosome. Interacts with SecDF, and other proteins may be involved. Interacts with SecA.

The protein localises to the cell membrane. In terms of biological role, the central subunit of the protein translocation channel SecYEG. Consists of two halves formed by TMs 1-5 and 6-10. These two domains form a lateral gate at the front which open onto the bilayer between TMs 2 and 7, and are clamped together by SecE at the back. The channel is closed by both a pore ring composed of hydrophobic SecY resides and a short helix (helix 2A) on the extracellular side of the membrane which forms a plug. The plug probably moves laterally to allow the channel to open. The ring and the pore may move independently. The polypeptide is Protein translocase subunit SecY (Staphylococcus carnosus (strain TM300)).